The following is a 185-amino-acid chain: MMKATIVLDAKGLACPMPIVKTKKRMKDLKAGEVLEIHATDKGSTADLEAWAKSTGHEYLGTEAEGEILRHFLRKGGEHSSENASSIPEISLEAFKQKVDSDESLNILDVREIEEYEKAHIPGVVHIPLGEVEKRANELNENDEIYIICHSGRRSEMAARTMKKQGFKKVINVVPGMRDWTGKTE.

Cysteine 15 serves as the catalytic Cysteine persulfide intermediate. One can recognise a Rhodanese domain in the interval 101 to 185 (SDESLNILDV…GMRDWTGKTE (85 aa)).

Belongs to the sulfur carrier protein TusA family.

In Bacillus subtilis (strain 168), this protein is Putative sulfur carrier protein YrkF (yrkF).